The primary structure comprises 62 residues: Small EDRK-rich factor 1 (62 aa).

2 stretches are compositionally biased toward basic and acidic residues: residues 1-30 (MARG…KEDS) and 50-62 (IANE…TTEK). A disordered region spans residues 1–62 (MARGNQREIA…EKKSMQTTEK (62 aa)).

It belongs to the SERF family. In terms of assembly, interacts with SNCA; this interaction promotes the aggregation of SNCA. In terms of tissue distribution, expressed in brain (at protein level). Highly expressed in the testis.

It localises to the cytoplasm. Its subcellular location is the cytosol. It is found in the nucleus. Its function is as follows. Positive regulator of amyloid protein aggregation and proteotoxicity. Induces conformational changes in amyloid proteins, such as APP, HTT, and SNCA, driving them into compact formations preceding the formation of aggregates. In Mus musculus (Mouse), this protein is Small EDRK-rich factor 1 (Serf1).